Reading from the N-terminus, the 73-residue chain is Small ribosomal subunit protein eS27 (73 aa).

Residues C28, C31, C47, and C50 each contribute to the Zn(2+) site. The C4-type zinc finger occupies 28–50 (CPKCGNRQVVFSHSTFRARCLNC).

It belongs to the eukaryotic ribosomal protein eS27 family. As to quaternary structure, part of the 30S ribosomal subunit. Zn(2+) serves as cofactor.

The polypeptide is Small ribosomal subunit protein eS27 (Aeropyrum pernix (strain ATCC 700893 / DSM 11879 / JCM 9820 / NBRC 100138 / K1)).